Here is an 81-residue protein sequence, read N- to C-terminus: Photosystem I iron-sulfur center (81 aa).

2 consecutive 4Fe-4S ferredoxin-type domains span residues S2–W31 and I39–Y68. Residues C11, C14, C17, C21, C48, C51, C54, and C58 each contribute to the [4Fe-4S] cluster site.

In terms of assembly, the G.violaceus PSI reaction center is composed of one copy each of PsaA,B,C,D,E,F,L,M and Z, and forms trimeric complexes. The cofactor is [4Fe-4S] cluster.

The protein resides in the cell inner membrane. The catalysed reaction is reduced [plastocyanin] + hnu + oxidized [2Fe-2S]-[ferredoxin] = oxidized [plastocyanin] + reduced [2Fe-2S]-[ferredoxin]. Apoprotein for the two 4Fe-4S centers FA and FB of photosystem I (PSI); essential for photochemical activity. FB is the terminal electron acceptor of PSI, donating electrons to ferredoxin. The C-terminus interacts with PsaA/B/D and helps assemble the protein into the PSI complex. Required for binding of PsaD and PsaE to PSI. PSI is a plastocyanin/cytochrome c6-ferredoxin oxidoreductase, converting photonic excitation into a charge separation, which transfers an electron from the donor P700 chlorophyll pair to the spectroscopically characterized acceptors A0, A1, FX, FA and FB in turn. The sequence is that of Photosystem I iron-sulfur center from Gloeobacter violaceus (strain ATCC 29082 / PCC 7421).